Here is a 32-residue protein sequence, read N- to C-terminus: uncharacterized protein (32 aa).

This is an uncharacterized protein from Saccharomyces cerevisiae (strain ATCC 204508 / S288c) (Baker's yeast).